Reading from the N-terminus, the 294-residue chain is Probable 2-(5''-triphosphoribosyl)-3'-dephosphocoenzyme-A synthase (294 aa).

It belongs to the CitG/MdcB family.

It catalyses the reaction 3'-dephospho-CoA + ATP = 2'-(5''-triphospho-alpha-D-ribosyl)-3'-dephospho-CoA + adenine. This is Probable 2-(5''-triphosphoribosyl)-3'-dephosphocoenzyme-A synthase from Streptococcus equi subsp. zooepidemicus (strain H70).